We begin with the raw amino-acid sequence, 52 residues long: UPF0057 membrane protein PA0567 (52 aa).

Transmembrane regions (helical) follow at residues 6–26 and 29–49; these read ILIA…FGGA and LNIL…VYII.

This sequence belongs to the UPF0057 (PMP3) family.

It localises to the cell membrane. The polypeptide is UPF0057 membrane protein PA0567 (Pseudomonas aeruginosa (strain ATCC 15692 / DSM 22644 / CIP 104116 / JCM 14847 / LMG 12228 / 1C / PRS 101 / PAO1)).